A 456-amino-acid polypeptide reads, in one-letter code: Multidrug resistance protein NorM (456 aa).

A run of 12 helical transmembrane segments spans residues 11–31 (LIKLATPVLIASVAQTGMGFV), 53–73 (IWLPSILFGIGLLMALVPVVA), 92–112 (VVLALLISIPIIGVLLQTQFI), 126–146 (TVGYIHAVIFAVPAFLLFQTL), 159–179 (AMVIGFIGLLLNIPLNWIFVY), 189–209 (GVGCGVATTIVYWVMFALLLA), 242–262 (FPVAAALFFEVTLFAVVALLV), 268–288 (IIVAAHQVAINFSSLVFMLPM), 314–334 (SRVGIMVGLALATITAIITVL), 356–376 (LLLFAAVYQCTDAVQVIAAGA), 385–405 (AIFNRTFIAYWILGLPTGYIL), and 417–437 (AQGFWLGFIIGLTAAALMLGV).

Belongs to the multi antimicrobial extrusion (MATE) (TC 2.A.66.1) family.

Its subcellular location is the cell inner membrane. Functionally, multidrug efflux pump that functions as a Na(+)/drug antiporter. Confers resistance to several drugs, such as norfloxacin, ciprofloxacin, ethidium, kanamycin and streptomycin. The protein is Multidrug resistance protein NorM (norM) of Vibrio parahaemolyticus serotype O3:K6 (strain RIMD 2210633).